Here is a 147-residue protein sequence, read N- to C-terminus: Sec-independent protein translocase protein TatB (147 aa).

A helical membrane pass occupies residues 1 to 21 (MFDVSFTELMVIGVIALVVIG). Residues 67–147 (DETARSMQTS…DKTPPTGSAT (81 aa)) form a disordered region. Basic and acidic residues predominate over residues 93 to 103 (AELDDTARDAS). 2 stretches are compositionally biased toward low complexity: residues 109-120 (ADAPAEPAPAVA) and 129-147 (APPA…GSAT).

This sequence belongs to the TatB family. In terms of assembly, the Tat system comprises two distinct complexes: a TatABC complex, containing multiple copies of TatA, TatB and TatC subunits, and a separate TatA complex, containing only TatA subunits. Substrates initially bind to the TatABC complex, which probably triggers association of the separate TatA complex to form the active translocon.

Its subcellular location is the cell inner membrane. Its function is as follows. Part of the twin-arginine translocation (Tat) system that transports large folded proteins containing a characteristic twin-arginine motif in their signal peptide across membranes. Together with TatC, TatB is part of a receptor directly interacting with Tat signal peptides. TatB may form an oligomeric binding site that transiently accommodates folded Tat precursor proteins before their translocation. The chain is Sec-independent protein translocase protein TatB from Bordetella pertussis (strain Tohama I / ATCC BAA-589 / NCTC 13251).